Consider the following 462-residue polypeptide: Histidine--tRNA ligase (462 aa).

Belongs to the class-II aminoacyl-tRNA synthetase family. As to quaternary structure, homodimer.

The protein resides in the cytoplasm. The catalysed reaction is tRNA(His) + L-histidine + ATP = L-histidyl-tRNA(His) + AMP + diphosphate + H(+). The chain is Histidine--tRNA ligase (hisS) from Nostoc sp. (strain PCC 7120 / SAG 25.82 / UTEX 2576).